Reading from the N-terminus, the 205-residue chain is Large ribosomal subunit protein uL4 (205 aa).

The segment at 56 to 78 (VSGTTAKPYRQKHTGRARQGSLR) is disordered.

It belongs to the universal ribosomal protein uL4 family. In terms of assembly, part of the 50S ribosomal subunit.

In terms of biological role, one of the primary rRNA binding proteins, this protein initially binds near the 5'-end of the 23S rRNA. It is important during the early stages of 50S assembly. It makes multiple contacts with different domains of the 23S rRNA in the assembled 50S subunit and ribosome. Forms part of the polypeptide exit tunnel. This Ehrlichia ruminantium (strain Gardel) protein is Large ribosomal subunit protein uL4.